The sequence spans 285 residues: Golgi phosphoprotein 3-like (285 aa).

The segment at 1 to 39 is disordered; that stretch reads MTTLTHRARRTEVGKNSEKKVESEENVNQDRNQDNEDIG. A compositionally biased stretch (basic and acidic residues) spans 10–23; it reads RTEVGKNSEKKVES. Positions 67 and 76 each coordinate a 1,2-diacyl-sn-glycero-3-phospho-(1D-myo-inositol 4-phosphate). The residue at position 112 (serine 112) is a Phosphoserine. A 1,2-diacyl-sn-glycero-3-phospho-(1D-myo-inositol 4-phosphate) is bound by residues arginine 157 and arginine 160. The segment at 176–187 is beta-hairpin required for oligomerization; that stretch reads EKQNFLLFDMTT.

It belongs to the GOLPH3/VPS74 family. In terms of assembly, homooligomer. Does not interact MYO18; differs from GOLPH3 by its inability to interact with MYO18. May interact with ARF1.

The protein resides in the golgi apparatus. It is found in the golgi stack membrane. Its subcellular location is the trans-Golgi network membrane. Functionally, phosphatidylinositol-4-phosphate-binding protein that may antagonize the action of GOLPH3 which is required for the process of vesicle budding at the Golgi and anterograde transport to the plasma membrane. This Bos taurus (Bovine) protein is Golgi phosphoprotein 3-like (GOLPH3L).